Consider the following 303-residue polypeptide: UPF0282 protein PAE3680 (303 aa).

It belongs to the UPF0282 family.

This is UPF0282 protein PAE3680 from Pyrobaculum aerophilum (strain ATCC 51768 / DSM 7523 / JCM 9630 / CIP 104966 / NBRC 100827 / IM2).